We begin with the raw amino-acid sequence, 940 residues long: UvrABC system protein A (940 aa).

31–38 lines the ATP pocket; it reads GLSGSGKS. The C4-type zinc-finger motif lies at 253–280; sequence CPICGYSMRELEPRLFSFNNPAGACPTC. 2 ABC transporter domains span residues 310–587 and 607–937; these read WDRR…PESL and ANPE…RFLK. Residue 640 to 647 coordinates ATP; it reads GVSGSGKS. A C4-type zinc finger spans residues 740-766; that stretch reads CEACQGDGVIKVEMHFLPDIYVPCDQC.

It belongs to the ABC transporter superfamily. UvrA family. Forms a heterotetramer with UvrB during the search for lesions.

Its subcellular location is the cytoplasm. Functionally, the UvrABC repair system catalyzes the recognition and processing of DNA lesions. UvrA is an ATPase and a DNA-binding protein. A damage recognition complex composed of 2 UvrA and 2 UvrB subunits scans DNA for abnormalities. When the presence of a lesion has been verified by UvrB, the UvrA molecules dissociate. Plays a role in recovery after DNA ADP-ribosylation. The sequence is that of UvrABC system protein A from Escherichia coli O127:H6 (strain E2348/69 / EPEC).